We begin with the raw amino-acid sequence, 406 residues long: Succinyl-diaminopimelate desuccinylase (406 aa).

His-95 contributes to the Zn(2+) binding site. The active site involves Asp-97. Zn(2+) is bound at residue Asp-128. The active-site Proton acceptor is the Glu-162. Zn(2+) contacts are provided by Glu-163, Glu-191, and His-377.

Belongs to the peptidase M20A family. DapE subfamily. In terms of assembly, homodimer. It depends on Zn(2+) as a cofactor. Requires Co(2+) as cofactor.

The catalysed reaction is N-succinyl-(2S,6S)-2,6-diaminopimelate + H2O = (2S,6S)-2,6-diaminopimelate + succinate. It participates in amino-acid biosynthesis; L-lysine biosynthesis via DAP pathway; LL-2,6-diaminopimelate from (S)-tetrahydrodipicolinate (succinylase route): step 3/3. Functionally, catalyzes the hydrolysis of N-succinyl-L,L-diaminopimelic acid (SDAP), forming succinate and LL-2,6-diaminopimelate (DAP), an intermediate involved in the bacterial biosynthesis of lysine and meso-diaminopimelic acid, an essential component of bacterial cell walls. The protein is Succinyl-diaminopimelate desuccinylase of Polaromonas naphthalenivorans (strain CJ2).